A 272-amino-acid chain; its full sequence is Shikimate dehydrogenase (NADP(+)) (272 aa).

Shikimate contacts are provided by residues 14-16 and Thr61; that span reads SKS. Catalysis depends on Lys65, which acts as the Proton acceptor. Glu77 serves as a coordination point for NADP(+). Shikimate-binding residues include Asn86 and Asp102. NADP(+)-binding positions include 126 to 130, 149 to 154, and Met213; these read GAGGA and NRTVSR. Tyr215 contributes to the shikimate binding site. Residue Gly237 coordinates NADP(+).

Belongs to the shikimate dehydrogenase family. As to quaternary structure, homodimer.

It carries out the reaction shikimate + NADP(+) = 3-dehydroshikimate + NADPH + H(+). Its pathway is metabolic intermediate biosynthesis; chorismate biosynthesis; chorismate from D-erythrose 4-phosphate and phosphoenolpyruvate: step 4/7. Its function is as follows. Involved in the biosynthesis of the chorismate, which leads to the biosynthesis of aromatic amino acids. Catalyzes the reversible NADPH linked reduction of 3-dehydroshikimate (DHSA) to yield shikimate (SA). The sequence is that of Shikimate dehydrogenase (NADP(+)) from Escherichia coli (strain K12 / MC4100 / BW2952).